A 372-amino-acid polypeptide reads, in one-letter code: N-methyl-L-tryptophan oxidase (372 aa).

4–34 lines the FAD pocket; that stretch reads DLIIIGSGSVGAAAGYYATRAGLKVLMTDAH. At Cys-307 the chain carries S-8alpha-FAD cysteine.

It belongs to the MSOX/MTOX family. MTOX subfamily. Monomer. Requires FAD as cofactor.

The catalysed reaction is N(alpha)-methyl-L-tryptophan + O2 + H2O = L-tryptophan + formaldehyde + H2O2. Its function is as follows. Catalyzes the oxidative demethylation of N-methyl-L-tryptophan. This is N-methyl-L-tryptophan oxidase from Salmonella agona (strain SL483).